The primary structure comprises 349 residues: Phenylalanine--tRNA ligase alpha subunit (349 aa).

Residue glutamate 262 coordinates Mg(2+).

Belongs to the class-II aminoacyl-tRNA synthetase family. Phe-tRNA synthetase alpha subunit type 1 subfamily. Tetramer of two alpha and two beta subunits. The cofactor is Mg(2+).

Its subcellular location is the cytoplasm. It carries out the reaction tRNA(Phe) + L-phenylalanine + ATP = L-phenylalanyl-tRNA(Phe) + AMP + diphosphate + H(+). The polypeptide is Phenylalanine--tRNA ligase alpha subunit (Sorangium cellulosum (strain So ce56) (Polyangium cellulosum (strain So ce56))).